The primary structure comprises 878 residues: Calcium-transporting ATPase 1 (878 aa).

Transmembrane regions (helical) follow at residues 50-72 (LFIDTLKDPMVIILLLVAFVQLF), 76-95 (FVESLVIFIVLMINSVVAVV), 243-263 (LGWVILALCALIFAVQILRLF), and 281-301 (FAVAVAVAAIPEALSSVVTIV). Ca(2+) contacts are provided by V287, A288, I290, and E292. D334 serves as the catalytic 4-aspartylphosphate intermediate. 6 consecutive transmembrane segments (helical) span residues 681–701 (LFSGNLGAIIAIVFALVVGWV), 704–724 (FTALQLLFINLVNDSVPAIAL), 753–773 (VILIRGSLIGIAAIISQYVGQ), 779–799 (MGVAMAFTTLILARTLQTFAA), 816–836 (YVLMAVTFCLALYSLTTLPFL), and 845–865 (AFGWSQWIVAAGLAVIAVICM). Residues N713 and D717 each contribute to the Ca(2+) site.

Belongs to the cation transport ATPase (P-type) (TC 3.A.3) family. Type IIA subfamily.

It localises to the cell membrane. The enzyme catalyses Ca(2+)(in) + ATP + H2O = Ca(2+)(out) + ADP + phosphate + H(+). With respect to regulation, inhibited by very high concentrations of cyclopiazonic acid (CPA). Catalyzes the hydrolysis of ATP coupled with the transport of calcium. The polypeptide is Calcium-transporting ATPase 1 (yoaB) (Lactococcus lactis subsp. lactis (strain IL1403) (Streptococcus lactis)).